We begin with the raw amino-acid sequence, 246 residues long: UPF0309 protein ABC0887 (246 aa).

Residues 33–212 (MVHAIKEGKS…VLKMIEQLEE (180 aa)) form the SIS domain.

Belongs to the UPF0309 family.

The polypeptide is UPF0309 protein ABC0887 (Shouchella clausii (strain KSM-K16) (Alkalihalobacillus clausii)).